Consider the following 195-residue polypeptide: Ras-related protein Rab-31 (195 aa).

GTP contacts are provided by Gly-16, Gly-18, Lys-19, Ser-20, Ser-21, Asp-32, and His-33. Residue Ser-20 participates in Mg(2+) binding. 2 consecutive short sequence motifs (switch) follow at residues 30–42 (HFDH…IGAS) and 63–79 (AGQE…YRGS). Phosphoserine is present on Ser-36. GTP-binding residues include Thr-38, Gly-64, Asn-119, Asp-122, Ala-150, and Lys-151. Thr-38 is a Mg(2+) binding site. 2 S-geranylgeranyl cysteine lipidation sites follow: Cys-194 and Cys-195.

Belongs to the small GTPase superfamily. Rab family. Interacts with OCRL. Interacts with NGFR. Interacts (in GDP-bound form) with RIN3 and GAPVD1, which function as guanine exchange factors (GEF). Interacts (in GTP-bound form) with EEA1. Interacts with EGFR. Interacts (in GTP-bound form) with APPL2; interaction contributes to or enhances recruitment of APPL2 to the phagosomes; interaction enhances Fc-gamma receptor-mediated phagocytosis through PI3K/Akt signaling in macrophages. The cofactor is Mg(2+). Highest expression in placenta and brain with lower levels in heart and lung. Not detected in liver, skeletal muscle, kidney or pancreas.

The protein resides in the golgi apparatus. The protein localises to the trans-Golgi network. Its subcellular location is the trans-Golgi network membrane. It localises to the early endosome. It is found in the cytoplasmic vesicle. The protein resides in the phagosome. The protein localises to the phagosome membrane. The catalysed reaction is GTP + H2O = GDP + phosphate + H(+). With respect to regulation, regulated by guanine nucleotide exchange factors (GEFs) including RIN3 and GAPVD1 which promote the exchange of bound GDP for free GTP. Regulated by GTPase activating proteins (GAPs) which increase the GTP hydrolysis activity. Inhibited by GDP dissociation inhibitors (GDIs) which prevent Rab-GDP dissociation. In terms of biological role, the small GTPases Rab are key regulators of intracellular membrane trafficking, from the formation of transport vesicles to their fusion with membranes. Rabs cycle between an inactive GDP-bound form and an active GTP-bound form that is able to recruit to membranes different set of downstream effectors directly responsible for vesicle formation, movement, tethering and fusion. Required for the integrity and for normal function of the Golgi apparatus and the trans-Golgi network. Plays a role in insulin-stimulated translocation of GLUT4 to the cell membrane. Plays a role in M6PR transport from the trans-Golgi network to endosomes. Plays a role in the internalization of EGFR from the cell membrane into endosomes. Plays a role in the maturation of phagosomes that engulf pathogens, such as S.aureus and M.tuberculosis. The protein is Ras-related protein Rab-31 of Homo sapiens (Human).